A 1036-amino-acid chain; its full sequence is Protein CLEC16A (1036 aa).

The FPL domain occupies 51 to 198 (IRSITEILIW…AVRTITLNVY (148 aa)). 4 disordered regions span residues 375 to 416 (SLEM…DAEK), 437 to 458 (GTSV…NSEN), 876 to 967 (HSSP…PSLL), and 1008 to 1036 (SQLP…PTEH). A compositionally biased stretch (basic residues) spans 381-392 (HKGKKRMQKRPN). 3 stretches are compositionally biased toward low complexity: residues 877–891 (SSPS…FASG), 898–923 (STSH…APTT), and 943–954 (NSKPSKNSSARS).

The protein belongs to the CLEC16A/gop-1 family. Interacts with RNF41/NRDP1. Ubiquitously expressed. Expressed in pancreatic islets.

It localises to the endosome membrane. The protein localises to the lysosome membrane. Functionally, regulator of mitophagy through the upstream regulation of the RNF41/NRDP1-PRKN pathway. Mitophagy is a selective form of autophagy necessary for mitochondrial quality control. The RNF41/NRDP1-PRKN pathway regulates autophagosome-lysosome fusion during late mitophagy. May protect RNF41/NRDP1 from proteasomal degradation, RNF41/NRDP1 which regulates proteasomal degradation of PRKN. Plays a key role in beta cells functions by regulating mitophagy/autophagy and mitochondrial health. The chain is Protein CLEC16A from Mus musculus (Mouse).